A 532-amino-acid chain; its full sequence is Germ cell nuclear acidic-1 protein (532 aa).

A compositionally biased stretch (basic and acidic residues) spans 1–10 (MPTPFRDLHN). Disordered regions lie at residues 1–50 (MPTP…EPIS), 84–181 (REAP…GNFE), and 213–253 (YISE…DRKQ). A compositionally biased stretch (low complexity) spans 14-32 (ASASSYETAWSSSFSSRRS). 3 stretches are compositionally biased toward basic and acidic residues: residues 39–48 (SNLKEIKDEP), 94–107 (LLQK…RDML), and 124–133 (KPKEVKKALK). Positions 213–235 (YISEESSEEESEEEEEDVDDEEY) are enriched in acidic residues. Residues 236–251 (RESSPEVEAKISYSDR) show a composition bias toward basic and acidic residues. The SprT-like domain maps to 308-398 (RRIFSAIPSE…GARCSSVFKS (91 aa)). The interval 468–489 (AKPVGPILSNSSKPSPPAPRRI) is disordered.

It belongs to the serine-aspartate repeat-containing protein (SDr) family. In terms of assembly, interacts with top-2; this interaction allows the resolution of topoisomerase II (top-2) DNA-protein cross-links. In terms of tissue distribution, mainly expressed in germ cells and early embryonic, proliferating cells.

It is found in the chromosome. Its function is as follows. May play a role in DNA-protein cross-links (DPCs) clearance through a SUMO-dependent recruitment to sites of DPCs, ensuring the genomic stability by protecting germ cells and early embryos from various sources of damage. May resolve the topoisomerase II (top-2) DPCs. Limits replication stress and DNA double-strand breaks. This chain is Germ cell nuclear acidic-1 protein, found in Caenorhabditis elegans.